Here is a 496-residue protein sequence, read N- to C-terminus: 4-O-methyl-glucuronoyl methylesterase 1 (496 aa).

A signal peptide spans 1–19 (MKSTVASALLVLAGTAVQA). Residues 20–55 (QSGPWQQCGGIGWQGPFTCVSGHTCQVLNDWYHQCV) form the CBM1 domain. Positions 57–151 (GGGPSPPPTS…RLPDPFTFHN (95 aa)) are disordered. Positions 59-125 (GPSPPPTSPP…SPPPTSPPPS (67 aa)) are enriched in pro residues. Disulfide bonds link Cys129-Cys163, Cys307-Cys443, and Cys339-Cys415. The short motif at 306 to 311 (GCSRNG) is the GXSYXG catalytic site motif element. Ser308 serves as the catalytic Nucleophile. Positions 312, 354, 362, and 406 each coordinate substrate. The active-site Proton donor/acceptor is His442.

Belongs to the carbohydrate esterase 15 (CE15) family.

It is found in the secreted. The catalysed reaction is a 4-O-methyl-alpha-D-glucuronosyl ester derivative + H2O = 4-O-methyl-alpha-D-glucuronate derivative + an alcohol + H(+). Glucuronoyl esterase which may play a significant role in biomass degradation, as it is considered to disconnect hemicellulose from lignin through the hydrolysis of the ester bond between 4-O-methyl-D-glucuronic acid residues of glucuronoxylans and aromatic alcohols of lignin. Cleaves native lignin-carbohydrate (LC) ester bonds from LC complex preparations of spruce (softwood) and birch (hardwood), containing mainly hemicelluloses with partially acetylated glucomannans in spruce and partially acetylated xylan in birch. Can hydrolyze benzyl glucuronic acid (BnGlcA), allyl glucuronic acid (allylGlcA) and to a lower degree methyl glucuronic acid (MeGlcA) in vitro. The chain is 4-O-methyl-glucuronoyl methylesterase 1 from Sodiomyces alcalophilus (Acremonium alcalophilum).